The following is a 345-amino-acid chain: Molybdopterin synthase catalytic subunit (345 aa).

Residues 101 to 102 (HR), K117, and 124 to 126 (KKE) each bind substrate.

The protein belongs to the MoaE family. MOCS2B subfamily. Heterotetramer; composed of 2 small (Mocs2A) and 2 large (Mocs2B) subunits.

It localises to the cytoplasm. The enzyme catalyses 2 [molybdopterin-synthase sulfur-carrier protein]-C-terminal-Gly-aminoethanethioate + cyclic pyranopterin phosphate + H2O = molybdopterin + 2 [molybdopterin-synthase sulfur-carrier protein]-C-terminal Gly-Gly + 2 H(+). The protein operates within cofactor biosynthesis; molybdopterin biosynthesis. Functionally, catalytic subunit of the molybdopterin synthase complex, a complex that catalyzes the conversion of precursor Z into molybdopterin. Acts by mediating the incorporation of 2 sulfur atoms from thiocarboxylated Mocs2A into precursor Z to generate a dithiolene group. The polypeptide is Molybdopterin synthase catalytic subunit (Drosophila virilis (Fruit fly)).